Here is a 248-residue protein sequence, read N- to C-terminus: Ribonuclease PH (248 aa).

Residues Arg86 and 124 to 126 (GTR) contribute to the phosphate site.

This sequence belongs to the RNase PH family. As to quaternary structure, homohexameric ring arranged as a trimer of dimers.

The enzyme catalyses tRNA(n+1) + phosphate = tRNA(n) + a ribonucleoside 5'-diphosphate. Its function is as follows. Phosphorolytic 3'-5' exoribonuclease that plays an important role in tRNA 3'-end maturation. Removes nucleotide residues following the 3'-CCA terminus of tRNAs; can also add nucleotides to the ends of RNA molecules by using nucleoside diphosphates as substrates, but this may not be physiologically important. Probably plays a role in initiation of 16S rRNA degradation (leading to ribosome degradation) during starvation. This is Ribonuclease PH from Clostridium perfringens (strain SM101 / Type A).